We begin with the raw amino-acid sequence, 325 residues long: Ribosomal RNA small subunit methyltransferase H (325 aa).

S-adenosyl-L-methionine-binding positions include 33-35 (GGH), D52, L87, D101, and Q108. The interval 285-325 (AEPAGEVEKADNPRAASVRLRAAERTAPNPDRTQPTIGGAS) is disordered. Over residues 315–325 (DRTQPTIGGAS) the composition is skewed to polar residues.

The protein belongs to the methyltransferase superfamily. RsmH family.

It localises to the cytoplasm. It catalyses the reaction cytidine(1402) in 16S rRNA + S-adenosyl-L-methionine = N(4)-methylcytidine(1402) in 16S rRNA + S-adenosyl-L-homocysteine + H(+). Specifically methylates the N4 position of cytidine in position 1402 (C1402) of 16S rRNA. The chain is Ribosomal RNA small subunit methyltransferase H from Frankia alni (strain DSM 45986 / CECT 9034 / ACN14a).